The sequence spans 272 residues: HMP-PP phosphatase (272 aa).

The Nucleophile role is filled by D8. 3 residues coordinate Mg(2+): D8, D10, and D212.

This sequence belongs to the HAD-like hydrolase superfamily. Cof family. Mg(2+) is required as a cofactor.

It carries out the reaction 4-amino-2-methyl-5-(diphosphooxymethyl)pyrimidine + H2O = 4-amino-2-methyl-5-(phosphooxymethyl)pyrimidine + phosphate + H(+). Its function is as follows. Catalyzes the hydrolysis of 4-amino-2-methyl-5-hydroxymethylpyrimidine pyrophosphate (HMP-PP) to 4-amino-2-methyl-5-hydroxymethylpyrimidine phosphate (HMP-P). The sequence is that of HMP-PP phosphatase from Escherichia coli O8 (strain IAI1).